A 90-amino-acid polypeptide reads, in one-letter code: Co-chaperonin GroES (90 aa).

Belongs to the GroES chaperonin family. In terms of assembly, heptamer of 7 subunits arranged in a ring. Interacts with the chaperonin GroEL.

The protein resides in the cytoplasm. In terms of biological role, together with the chaperonin GroEL, plays an essential role in assisting protein folding. The GroEL-GroES system forms a nano-cage that allows encapsulation of the non-native substrate proteins and provides a physical environment optimized to promote and accelerate protein folding. GroES binds to the apical surface of the GroEL ring, thereby capping the opening of the GroEL channel. The sequence is that of Co-chaperonin GroES from Bacteroides fragilis (strain ATCC 25285 / DSM 2151 / CCUG 4856 / JCM 11019 / LMG 10263 / NCTC 9343 / Onslow / VPI 2553 / EN-2).